Consider the following 595-residue polypeptide: L-fucose isomerase (595 aa).

Active-site proton acceptor residues include Glu-341 and Asp-365. Residues Glu-341, Asp-365, and His-531 each coordinate Mn(2+).

This sequence belongs to the L-fucose isomerase family. The cofactor is Mn(2+).

It is found in the cytoplasm. The enzyme catalyses L-fucose = L-fuculose. It participates in carbohydrate degradation; L-fucose degradation; L-lactaldehyde and glycerone phosphate from L-fucose: step 1/3. Converts the aldose L-fucose into the corresponding ketose L-fuculose. The polypeptide is L-fucose isomerase (Clostridium perfringens (strain 13 / Type A)).